A 373-amino-acid polypeptide reads, in one-letter code: Ras association domain-containing protein 7 (373 aa).

One can recognise a Ras-associating domain in the interval 6 to 89 (AAMELKVWVD…VQFVLRRTGP (84 aa)). The disordered stretch occupies residues 122-150 (CEPRKTLTPEPAPSLSRPGPAAPVTPTPG). Coiled-coil stretches lie at residues 175–227 (WEQE…AAEA) and 248–297 (QERQ…QFIQ). Residues 300–356 (GAALPPPPRPDRGPPGTQGPLPPAREESLLGAPSESHAGAQPRPRGGPHDAELLEVA) form a disordered region.

In terms of assembly, interacts with MAP2K7 and GTP-bound NRAS. Post-translationally, polyubiquitinated and degraded by the proteasome upon prolonged stress stimuli.

The protein resides in the cytoplasm. It localises to the cytoskeleton. Its subcellular location is the microtubule organizing center. It is found in the centrosome. In terms of biological role, negatively regulates stress-induced JNK activation and apoptosis by promoting MAP2K7 phosphorylation and inhibiting its ability to activate JNK. Following prolonged stress, anti-apoptotic effect stops because of degradation of RASSF7 protein via the ubiquitin-proteasome pathway. Required for the activation of AURKB and chromosomal congression during mitosis where it stimulates microtubule polymerization. This chain is Ras association domain-containing protein 7 (RASSF7), found in Homo sapiens (Human).